Here is a 130-residue protein sequence, read N- to C-terminus: Small ribosomal subunit protein uS8 (130 aa).

The protein belongs to the universal ribosomal protein uS8 family.

This chain is Small ribosomal subunit protein uS8 (RPS22), found in Candida glabrata (strain ATCC 2001 / BCRC 20586 / JCM 3761 / NBRC 0622 / NRRL Y-65 / CBS 138) (Yeast).